A 347-amino-acid chain; its full sequence is GMP reductase (347 aa).

108–131 lines the NADP(+) pocket; the sequence is ADFEKTKQILDLNSALNFVCIDVA. The K(+) site is built by G181 and G183. The Thioimidate intermediate role is filled by C186. 216–239 lines the NADP(+) pocket; the sequence is IVSDGGCTTPGDVAKAFGGGADFV.

It belongs to the IMPDH/GMPR family. GuaC type 1 subfamily. As to quaternary structure, homotetramer.

The catalysed reaction is IMP + NH4(+) + NADP(+) = GMP + NADPH + 2 H(+). Functionally, catalyzes the irreversible NADPH-dependent deamination of GMP to IMP. It functions in the conversion of nucleobase, nucleoside and nucleotide derivatives of G to A nucleotides, and in maintaining the intracellular balance of A and G nucleotides. The polypeptide is GMP reductase (Escherichia coli O81 (strain ED1a)).